The following is a 349-amino-acid chain: UDP-N-acetylenolpyruvoylglucosamine reductase (349 aa).

The FAD-binding PCMH-type domain occupies 24–197; the sequence is FGIDATARFA…VAVTFRLPKR (174 aa). Arg173 is a catalytic residue. Ser249 acts as the Proton donor in catalysis. The active site involves Glu345.

This sequence belongs to the MurB family. The cofactor is FAD.

It localises to the cytoplasm. It catalyses the reaction UDP-N-acetyl-alpha-D-muramate + NADP(+) = UDP-N-acetyl-3-O-(1-carboxyvinyl)-alpha-D-glucosamine + NADPH + H(+). The protein operates within cell wall biogenesis; peptidoglycan biosynthesis. Functionally, cell wall formation. This Burkholderia ambifaria (strain ATCC BAA-244 / DSM 16087 / CCUG 44356 / LMG 19182 / AMMD) (Burkholderia cepacia (strain AMMD)) protein is UDP-N-acetylenolpyruvoylglucosamine reductase.